The sequence spans 1012 residues: MDSVSFFNPYLEANRLKKKSRSSYIRILPRGIMHDGAAGLIKDVCDSEPRMFYRDRQYLLSKEMTWPSLDIARSKDYDHMRMKFHIYDAVETLMFTDSIENLPFQYRHFVIPSGTVIRMFGRTEDGEKICVNVFGQEQYFYCECVDGRSLKATINNLMLTGEVKMSCSFVIEPADKLSLYGYNANTVVNLFKVSFGNFYVSQRIGKILQNEGFVVYEIDVDVLTRFFVDNGFLSFGWYNVKKYIPQDMGKGSNLEVEINCHVSDLVSLEDVNWPLYGCWSFDIECLGQNGNFPDAENLGDIVIQISVISFDTEGDRDERHLFTLGTCEKIDGVHIYEFASEFELLLGFFIFLRIESPEFITGYNINNFDLKYLCIRMDKIYHYDIGCFSKLKNGKIGISVPHEQYRKGFLQAQTKVFTSGVLYLDMYPVYSSKITAQNYKLDTIAKICLQQEKEQLSYKEIPKKFISGPSGRAVVGKYCLQDSVLVVRLFKQINYHFEVAEVARLAHVTARCVVFEGQQKKIFPCILTEAKRRNMILPSMVSSHNRQGIGYKGATVLEPKTGYYAVPTVVFDFQSLYPSIMMAHNLCYSTLVLDERQIAGLSESDILTVKLGDETHRFVKPCIRESVLGSLLKDWLAKRREVKAEMQNCSDPMMKLLLDKKQLALKTTCNSVYGVTGAAHGLLPCVAIAASVTCLGREMLCSTVDYVNSKMQSEQFFCEEFGLTSSDFTGDLEVEVIYGDTDSIFMSVRNMVNQSLRRIAPMIAKHITDRLFKSPIKLEFEKILCPLILICKKRYIGRQDDSLLIFKGVDLVRKTSCDFVKGVVKDIVDLLFFDEEVQTAAVEFSHMTQTQLREQGVPVGIHKILRRLCEAREELFQNRADVRHLMLSSVLSKEMAAYKQPNLAHLSVIRRLAQRKEEIPNVGDRIMYVLIAPSIGNKQTHNYELAEDPNYVIEHKIPIHAEKYFDQIIKAVTNAISPIFPKTDIKKEKLLLYLLPMKVYLDETFSAIAEVM.

The protein belongs to the DNA polymerase type-B family.

It localises to the host nucleus. It carries out the reaction DNA(n) + a 2'-deoxyribonucleoside 5'-triphosphate = DNA(n+1) + diphosphate. This chain is DNA polymerase catalytic subunit (U38), found in Human herpesvirus 6A (strain Uganda-1102) (HHV-6 variant A).